The chain runs to 116 residues: Sperm mitochondrial-associated cysteine-rich protein (116 aa).

7 repeat units span residues 6–13 (KHSKCCPA), 14–21 (KGNQCCPP), 30–37 (KGNQCCPP), 38–45 (KQNQCCQP), 46–53 (KGSQCCPP), 54–61 (KHNHCCQP), and 62–68 (KPPCCIQ). Residues 6-68 (KHSKCCPAKG…CQPKPPCCIQ (63 aa)) are 7 X 7 (OR 8) AA approximate repeats. The tract at residues 80–116 (VSPLNMESEPNSPQTQDKGCQTQQQPHSPQNESRPSK) is disordered. Positions 93–104 (QTQDKGCQTQQQ) are enriched in low complexity. Residues 105-116 (PHSPQNESRPSK) are compositionally biased toward polar residues.

Testis. Is selectively expressed in the spermatids of seminiferous tubules.

The protein localises to the cytoplasm. Its subcellular location is the mitochondrion membrane. In terms of biological role, involved in sperm motility. Its absence is associated with genetic background dependent male infertility. Infertility may be due to reduced sperm motility in the female reproductive tract and inability to penetrate the oocyte zona pellucida. This is Sperm mitochondrial-associated cysteine-rich protein (SMCP) from Homo sapiens (Human).